Reading from the N-terminus, the 496-residue chain is Alanine aminotransferase 1 (496 aa).

Ala2 bears the N-acetylalanine mark. A Phosphothreonine modification is found at Thr22. Lys314 is modified (N6-(pyridoxal phosphate)lysine).

It belongs to the class-I pyridoxal-phosphate-dependent aminotransferase family. Alanine aminotransferase subfamily. Homodimer. The cofactor is pyridoxal 5'-phosphate. In terms of tissue distribution, mainly expressed in liver, intestine, colon and white adipose tissue.

It is found in the cytoplasm. It catalyses the reaction L-alanine + 2-oxoglutarate = pyruvate + L-glutamate. It functions in the pathway amino-acid degradation; L-alanine degradation via transaminase pathway; pyruvate from L-alanine: step 1/1. Functionally, catalyzes the reversible transamination between alanine and 2-oxoglutarate to form pyruvate and glutamate. Participates in cellular nitrogen metabolism and also in liver gluconeogenesis starting with precursors transported from skeletal muscles. This Mus musculus (Mouse) protein is Alanine aminotransferase 1 (Gpt).